The primary structure comprises 272 residues: Shikimate dehydrogenase (NADP(+)) (272 aa).

Residues 14 to 16 and T61 each bind shikimate; that span reads SLS. The active-site Proton acceptor is the K65. D102 serves as a coordination point for shikimate. Residues 127–131, 151–156, and L215 each bind NADP(+); these read GAGGA and NRTPSK. Residue Y217 participates in shikimate binding. Residue G239 participates in NADP(+) binding.

Belongs to the shikimate dehydrogenase family. In terms of assembly, homodimer.

The catalysed reaction is shikimate + NADP(+) = 3-dehydroshikimate + NADPH + H(+). Its pathway is metabolic intermediate biosynthesis; chorismate biosynthesis; chorismate from D-erythrose 4-phosphate and phosphoenolpyruvate: step 4/7. Functionally, involved in the biosynthesis of the chorismate, which leads to the biosynthesis of aromatic amino acids. Catalyzes the reversible NADPH linked reduction of 3-dehydroshikimate (DHSA) to yield shikimate (SA). The polypeptide is Shikimate dehydrogenase (NADP(+)) (Coxiella burnetii (strain CbuK_Q154) (Coxiella burnetii (strain Q154))).